Consider the following 1097-residue polypeptide: DNA-directed RNA polymerase subunit beta (1097 aa).

Positions 1073 to 1097 are disordered; it reads DVNPRRSTPSRPTYESLGVADYDED.

Belongs to the RNA polymerase beta chain family. As to quaternary structure, in cyanobacteria the RNAP catalytic core is composed of 2 alpha, 1 beta, 1 beta', 1 gamma and 1 omega subunit. When a sigma factor is associated with the core the holoenzyme is formed, which can initiate transcription.

It carries out the reaction RNA(n) + a ribonucleoside 5'-triphosphate = RNA(n+1) + diphosphate. In terms of biological role, DNA-dependent RNA polymerase catalyzes the transcription of DNA into RNA using the four ribonucleoside triphosphates as substrates. This Synechococcus sp. (strain RCC307) protein is DNA-directed RNA polymerase subunit beta.